Consider the following 492-residue polypeptide: Protein nucleotidyltransferase YdiU (492 aa).

Residues Gly88, Gly90, Arg91, Lys111, Asp123, Gly124, Arg174, and Arg181 each contribute to the ATP site. The active-site Proton acceptor is Asp250. Positions 251 and 260 each coordinate Mg(2+). Position 260 (Asp260) interacts with ATP.

Belongs to the SELO family. Requires Mg(2+) as cofactor. Mn(2+) serves as cofactor.

The enzyme catalyses L-seryl-[protein] + ATP = 3-O-(5'-adenylyl)-L-seryl-[protein] + diphosphate. It catalyses the reaction L-threonyl-[protein] + ATP = 3-O-(5'-adenylyl)-L-threonyl-[protein] + diphosphate. It carries out the reaction L-tyrosyl-[protein] + ATP = O-(5'-adenylyl)-L-tyrosyl-[protein] + diphosphate. The catalysed reaction is L-histidyl-[protein] + UTP = N(tele)-(5'-uridylyl)-L-histidyl-[protein] + diphosphate. The enzyme catalyses L-seryl-[protein] + UTP = O-(5'-uridylyl)-L-seryl-[protein] + diphosphate. It catalyses the reaction L-tyrosyl-[protein] + UTP = O-(5'-uridylyl)-L-tyrosyl-[protein] + diphosphate. Functionally, nucleotidyltransferase involved in the post-translational modification of proteins. It can catalyze the addition of adenosine monophosphate (AMP) or uridine monophosphate (UMP) to a protein, resulting in modifications known as AMPylation and UMPylation. The chain is Protein nucleotidyltransferase YdiU from Rhodopseudomonas palustris (strain HaA2).